Reading from the N-terminus, the 540-residue chain is Arylsulfatase K (540 aa).

Positions 1 to 22 (MLLLWVSVVAASALAAPAPGAD) are cleaved as a signal peptide. Ca(2+)-binding residues include Asp-44 and Cys-84. Cys-84 functions as the Nucleophile in the catalytic mechanism. Position 84 is a 3-oxoalanine (Cys) (Cys-84). N-linked (GlcNAc...) asparagine glycosylation occurs at Asn-112. Lys-132 contributes to the substrate binding site. Asn-197 carries an N-linked (GlcNAc...) asparagine glycan. His-255 is a substrate binding site. Asn-266 carries an N-linked (GlcNAc...) asparagine glycan. Ca(2+)-binding residues include Asp-317 and His-318. Residues Asn-379, Asn-417, and Asn-502 are each glycosylated (N-linked (GlcNAc...) asparagine).

It belongs to the sulfatase family. Ca(2+) is required as a cofactor. The conversion to 3-oxoalanine (also known as C-formylglycine, FGly), of a serine or cysteine residue in prokaryotes and of a cysteine residue in eukaryotes, is critical for catalytic activity. Post-translationally, the 75-kDa precursor undergoes proteolytic processing to yield a 23 kDa form. In terms of processing, N-glycosylated with both high mannose and complex type sugars.

Its subcellular location is the secreted. It is found in the lysosome. It carries out the reaction an aryl sulfate + H2O = a phenol + sulfate + H(+). It catalyses the reaction Hydrolysis of the 2-sulfate groups of the 2-O-sulfo-D-glucuronate residues of chondroitin sulfate, heparin and heparitin sulfate.. Its function is as follows. Catalyzes the hydrolysis of pseudosubstrates such as p-nitrocatechol sulfate and p-nitrophenyl sulfate. Catalyzes the hydrolysis of the 2-sulfate groups of the 2-O-sulfo-D-glucuronate residues of chondroitin sulfate, heparin and heparitin sulfate. Acts selectively on 2-sulfoglucuronate and lacks activity against 2-sulfoiduronate. This chain is Arylsulfatase K (ARSK), found in Bos taurus (Bovine).